A 699-amino-acid chain; its full sequence is Epithelial sodium channel subunit alpha (699 aa).

Residues 1-71 (MLDHTRAPEL…EPRQPTEEEE (71 aa)) form a disordered region. Residues 1-110 (MLDHTRAPEL…CSKHNRMKTA (110 aa)) are Cytoplasmic-facing. Residues 111 to 131 (FWAVLWLCTFGMMYWQFALLF) form a helical membrane-spanning segment. At 132–589 (EEYFSYPVSL…SQWSLWFGSS (458 aa)) the chain is on the extracellular side. Disulfide bonds link Cys-158–Cys-332, Cys-256–Cys-263, Cys-309–Cys-316, Cys-421–Cys-506, Cys-443–Cys-483, Cys-443–Cys-502, Cys-447–Cys-498, Cys-456–Cys-483, Cys-456–Cys-506, and Cys-458–Cys-472. The interval 200–270 (RRRSTRDLRG…SDCFYQTYSS (71 aa)) is gating release of inhibition by proteolysis (GRIP); protease-sensitive region that is responsible for the proteolytic activation of the channel. Residues 211–244 (LPHPLQRLRTPPPPNPARSARSASSSVRDNNPQV) form a disordered region. Low complexity predominate over residues 227–238 (ARSARSASSSVR). A helical transmembrane segment spans residues 590 to 610 (VLSVVEMAELIFDLLVITLIM). The Cytoplasmic segment spans residues 611-699 (LLHRFRSRYW…SSACAPAMAL (89 aa)). Residues 637 to 699 (ASSFPSRFCP…SSACAPAMAL (63 aa)) form a disordered region. Residues 656–667 (PQQGTTPPLALT) are compositionally biased toward low complexity. The PY motif; recruits WW domain-containing proteins and is thereby required for ubiquitination and inhibition of the channel by NEDD4 and NEDD4L signature appears at 669 to 673 (PPPAY).

It belongs to the amiloride-sensitive sodium channel (TC 1.A.6) family. SCNN1A subfamily. In terms of assembly, heterotrimer; containing an alpha/SCNN1A, a beta/SCNN1B and a gamma/SCNN1G subunit. Interacts with WWP1 (via WW domains). Interacts with WWP2 (via WW domains); inhibits the channel. Interacts with BPIFA1; the interaction is indirect via SCNN1B and inhibits the proteolytic processing of SCNN1A and SCNN1G and the activation of ENaC. Interacts with the full-length immature form of PCSK9 (pro-PCSK9). Post-translationally, ubiquitinated. Can be ubiquitinated at multiple sites and undergo monoubiquitination and polyubiquitination. Ubiquitination by NEDD4 or NEDD4L inhibits the ENaC channel through endocytosis, intracellular retention and degradation of its individual subunits. In terms of processing, ENaC is activated through the proteolytic maturation of its subunits. Furin cleaves the SCNN1A subunit, which results in a stepwise increase in the open probability of the channel due to the release of an inhibitory tract. BPIFA1, which is recruited by the SCNN1B subunit, prevents the proteolytic activation of ENaC. N-glycosylated. In terms of tissue distribution, expressed in kidney (at protein level). Expressed in lung (at protein level). Expressed in the epididymis (at protein level). In the caput and corpus regions of the epididymis, expressed uniformly on the luminal and basal surfaces of the ducts and in the sperm in the duct lumen. Also expressed in distal colon and, at low levels, in liver.

Its subcellular location is the apical cell membrane. The protein resides in the cell projection. It is found in the cilium. The protein localises to the cytoplasmic granule. It localises to the cytoplasm. Its subcellular location is the cytoplasmic vesicle. The protein resides in the secretory vesicle. It is found in the acrosome. The protein localises to the flagellum. The enzyme catalyses Na(+)(in) = Na(+)(out). With respect to regulation, originally identified and characterized by its inhibition by the diuretic drug amiloride. Functionally, this is one of the three pore-forming subunits of the heterotrimeric epithelial sodium channel (ENaC), a critical regulator of sodium balance and fluid homeostasis. ENaC operates in epithelial tissues, where it mediates the electrodiffusion of sodium ions from extracellular fluid through the apical membrane of cells, with water following osmotically. It plays a key role in maintaining sodium homeostasis through electrogenic sodium reabsorption in the kidneys. Additionally, ENaC is essential for airway surface liquid homeostasis, which is crucial for proper mucus clearance. In Mus musculus (Mouse), this protein is Epithelial sodium channel subunit alpha.